We begin with the raw amino-acid sequence, 59 residues long: Large ribosomal subunit protein uL30 (59 aa).

This sequence belongs to the universal ribosomal protein uL30 family. Part of the 50S ribosomal subunit.

In Clostridium botulinum (strain 657 / Type Ba4), this protein is Large ribosomal subunit protein uL30.